Reading from the N-terminus, the 478-residue chain is Lipoprotein lipase (478 aa).

The signal sequence occupies residues 1-27 (MESKALLLVALSVWLQSLIVSREGLAT). Residues 35-56 (RDFTDIESKFALRTPEDTVEDT) form an interaction with GPIHBP1 region. A disulfide bridge connects residues Cys-57 and Cys-70. An N-linked (GlcNAc...) asparagine glycan is attached at Asn-73. Tyr-124 is subject to 3'-nitrotyrosine. The active-site Nucleophile is Ser-162. Asp-186 (charge relay system) is an active-site residue. Tyr-194 bears the 3'-nitrotyrosine mark. Positions 197, 200, 202, and 205 each coordinate Ca(2+). A disulfide bond links Cys-246 and Cys-269. An essential for determining substrate specificity region spans residues 246–269 (CNIGEAIRVIAERGLGDVDQLVKC). His-271 acts as the Charge relay system in catalysis. Disulfide bonds link Cys-294–Cys-313 and Cys-305–Cys-308. The PLAT domain maps to 344–467 (FHYQVKMRFS…KGKSSVVFVK (124 aa)). A 3'-nitrotyrosine modification is found at Tyr-346. N-linked (GlcNAc...) asparagine glycosylation is present at Asn-389. Residues 420–424 (WSNWW) form an important for interaction with lipoprotein particles region. The tract at residues 433-437 (KIRVK) is important for heparin binding. The tract at residues 446-470 (IFCSREKKSHLQKGKSSVVFVKCHD) is interaction with GPIHBP1. Cys-448 and Cys-468 are joined by a disulfide.

Belongs to the AB hydrolase superfamily. Lipase family. As to quaternary structure, homodimer. Interacts with GPIHBP1 with 1:1 stoichiometry. Interacts with APOC2; the interaction activates LPL activity in the presence of lipids. Interaction with heparan sulfate proteoglycans is required to protect LPL against loss of activity. Associates with lipoprotein particles in blood plasma. Interacts with LMF1 and SEL1L; interaction with SEL1L is required to prevent aggregation of newly synthesized LPL in the endoplasmic reticulum (ER), and for normal export of LPL from the ER to the extracellular space. Interacts with SORL1; SORL1 acts as a sorting receptor, promoting LPL localization to endosomes and later to lysosomes, leading to degradation of newly synthesized LPL. In terms of processing, tyrosine nitration after lipopolysaccharide (LPS) challenge down-regulates the lipase activity.

The protein resides in the cell membrane. The protein localises to the secreted. It is found in the extracellular space. Its subcellular location is the extracellular matrix. The enzyme catalyses a triacylglycerol + H2O = a diacylglycerol + a fatty acid + H(+). It catalyses the reaction a 1,2-diacyl-sn-glycero-3-phosphocholine + H2O = a 2-acyl-sn-glycero-3-phosphocholine + a fatty acid + H(+). The catalysed reaction is 1,2,3-tri-(9Z-octadecenoyl)-glycerol + H2O = di-(9Z)-octadecenoylglycerol + (9Z)-octadecenoate + H(+). It carries out the reaction 1,2-di-(9Z-octadecenoyl)-sn-glycero-3-phosphocholine + H2O = (9Z-octadecenoyl)-sn-glycero-3-phosphocholine + (9Z)-octadecenoate + H(+). The enzyme catalyses 1,2,3-tributanoylglycerol + H2O = dibutanoylglycerol + butanoate + H(+). It catalyses the reaction 1,2-dihexadecanoyl-sn-glycero-3-phosphocholine + H2O = hexadecanoyl-sn-glycero-3-phosphocholine + hexadecanoate + H(+). With respect to regulation, the apolipoprotein APOC2 acts as a coactivator of LPL activity. Ca(2+) binding promotes protein stability and formation of the active homodimer. Interaction with GPIHBP1 protects LPL against inactivation by ANGPTL4. Its function is as follows. Key enzyme in triglyceride metabolism. Catalyzes the hydrolysis of triglycerides from circulating chylomicrons and very low density lipoproteins (VLDL), and thereby plays an important role in lipid clearance from the blood stream, lipid utilization and storage. Although it has both phospholipase and triglyceride lipase activities it is primarily a triglyceride lipase with low but detectable phospholipase activity. Mediates margination of triglyceride-rich lipoprotein particles in capillaries. Recruited to its site of action on the luminal surface of vascular endothelium by binding to GPIHBP1 and cell surface heparan sulfate proteoglycans. The protein is Lipoprotein lipase (LPL) of Sus scrofa (Pig).